Consider the following 262-residue polypeptide: Trypsin theta (262 aa).

A signal peptide spans 1–19; the sequence is MHRLVVLLVCLAVGSACAG. A propeptide spans 20-34 (activation peptide); that stretch reads TVGVSNGDPFEREGR. Residues 35-260 form the Peptidase S1 domain; that stretch reads IVGGEDTTIG…LRKWILNASE (226 aa). Cys61 and Cys77 are oxidised to a cystine. Residues His76 and Asp121 each act as charge relay system in the active site. Disulfide bonds link Cys186–Cys203 and Cys212–Cys236. The active-site Charge relay system is Ser216.

This sequence belongs to the peptidase S1 family.

Its subcellular location is the secreted. It localises to the extracellular space. The enzyme catalyses Preferential cleavage: Arg-|-Xaa, Lys-|-Xaa.. The sequence is that of Trypsin theta (thetaTry) from Drosophila melanogaster (Fruit fly).